The primary structure comprises 130 residues: Small ribosomal subunit protein uS9 (130 aa).

Belongs to the universal ribosomal protein uS9 family.

The protein is Small ribosomal subunit protein uS9 of Buchnera aphidicola subsp. Baizongia pistaciae (strain Bp).